The chain runs to 137 residues: Large ribosomal subunit protein uL16 (137 aa).

The protein belongs to the universal ribosomal protein uL16 family. As to quaternary structure, part of the 50S ribosomal subunit.

Its function is as follows. Binds 23S rRNA and is also seen to make contacts with the A and possibly P site tRNAs. The chain is Large ribosomal subunit protein uL16 from Bartonella quintana (strain Toulouse) (Rochalimaea quintana).